The sequence spans 1477 residues: Lysine-specific demethylase rbr-2 (1477 aa).

The segment at 1–37 (MRARRQENSISTPSAPSTSTSPRKKASIGNSRSKNHG) is disordered. Over residues 9 to 21 (SISTPSAPSTSTS) the composition is skewed to low complexity. One can recognise a JmjN domain in the interval 56–97 (APIYYPTEEEFSDPIEYVAKIRHEAEKFGVVKIVPPANFKPP). The ARID domain occupies 121–218 (VKEKHTFIDR…HIEPFNRNLK (98 aa)). The tract at residues 222–314 (MKNDDESDDE…KAEGDDDDDE (93 aa)) is disordered. A compositionally biased stretch (basic and acidic residues) spans 246 to 259 (MRTEIEVPNDKTTE). 2 stretches are compositionally biased toward basic residues: residues 272–283 (GRRRSKNKKASS) and 295–304 (NSTRGRKNKK). A PHD-type 1 zinc finger spans residues 319-371 (QVFCVACNEGKDEDLLLLCDIDGCNNGRHTYCCDPVLDEVPEGEWRCPKCIES). A JmjC domain is found at 468–634 (QYASHAWNLN…KGRECVESYS (167 aa)). Positions 514, 517, and 602 each coordinate Fe cation. Residues 874–926 (IIDKLEKWMEQVEMWRNRAKDAIYREQEYSKEEIEKIIEEGDEYDIKLEEIDE) adopt a coiled-coil conformation. A PHD-type 2 zinc finger spans residues 1203–1257 (LEACSCLGFNKSDDSESTLTCIMCDSEFHVRCCEWSPFLEKLPEGCFLCVRCLRG). The disordered stretch occupies residues 1375–1404 (TAKRKRPSVSHKETSKKSRKRQSQASPSEY). Residues 1411 to 1466 (FKSCQARACLKPYGDSVNWVMCEAGCKNWFHVICLGFTLREINDMHEYRCSSCLDH) form a PHD-type 3 zinc finger.

This sequence belongs to the JARID1 histone demethylase family. The cofactor is Fe(2+).

The protein localises to the nucleus. It carries out the reaction N(6),N(6),N(6)-trimethyl-L-lysyl(4)-[histone H3] + 3 2-oxoglutarate + 3 O2 = L-lysyl(4)-[histone H3] + 3 formaldehyde + 3 succinate + 3 CO2. Its function is as follows. Histone demethylase that specifically demethylates 'Lys-4' of histone H3, thereby playing a central role in histone code. Does not demethylate histone H3 'Lys-9', H3 'Lys-27', H3 'Lys-36', H3 'Lys-79' or H4 'Lys-20'. Demethylates trimethylated and dimethylated but not monomethylated H3 'Lys-4'. Required for normal longevity of the soma in a germline-dependent manner. Implicated in the epigenetic inheritance of lifespan over several generations. Involved in larval development and vulva formation. This chain is Lysine-specific demethylase rbr-2 (rbr-2), found in Caenorhabditis elegans.